We begin with the raw amino-acid sequence, 253 residues long: LexA repressor (253 aa).

Positions 1–34 are disordered; it reads MAIEKKPAGARGSRGSRTVKTLPNGKPDPASLSD. Residues 56–76 constitute a DNA-binding region (H-T-H motif); it reads IREIGDAAGLQSTSSVAYQLK. Over residues 82 to 106 the composition is skewed to basic and acidic residues; that stretch reads GFLRRDPNKPRAVDVRHLPETESRS. Residues 82 to 127 are disordered; that stretch reads GFLRRDPNKPRAVDVRHLPETESRSSKAATQAKSKAPQAGAHDPEL. Low complexity predominate over residues 107–120; that stretch reads SKAATQAKSKAPQA. Residues S177 and K214 each act as for autocatalytic cleavage activity in the active site.

Belongs to the peptidase S24 family. Homodimer.

It catalyses the reaction Hydrolysis of Ala-|-Gly bond in repressor LexA.. In terms of biological role, represses a number of genes involved in the response to DNA damage (SOS response), including recA and lexA. In the presence of single-stranded DNA, RecA interacts with LexA causing an autocatalytic cleavage which disrupts the DNA-binding part of LexA, leading to derepression of the SOS regulon and eventually DNA repair. This chain is LexA repressor, found in Corynebacterium glutamicum (strain R).